We begin with the raw amino-acid sequence, 131 residues long: Small ribosomal subunit protein bS6 (131 aa).

The segment at 98–131 (EASPMVKAKDERRERREDFANETSEETEAGDSEE) is disordered. The segment covering 104 to 116 (KAKDERRERREDF) has biased composition (basic and acidic residues). A compositionally biased stretch (acidic residues) spans 120 to 131 (TSEETEAGDSEE).

Belongs to the bacterial ribosomal protein bS6 family.

Binds together with bS18 to 16S ribosomal RNA. This Edwardsiella ictaluri (strain 93-146) protein is Small ribosomal subunit protein bS6.